We begin with the raw amino-acid sequence, 352 residues long: Phosphoribosylformylglycinamidine cyclo-ligase (352 aa).

The protein belongs to the AIR synthase family.

Its subcellular location is the cytoplasm. The catalysed reaction is 2-formamido-N(1)-(5-O-phospho-beta-D-ribosyl)acetamidine + ATP = 5-amino-1-(5-phospho-beta-D-ribosyl)imidazole + ADP + phosphate + H(+). Its pathway is purine metabolism; IMP biosynthesis via de novo pathway; 5-amino-1-(5-phospho-D-ribosyl)imidazole from N(2)-formyl-N(1)-(5-phospho-D-ribosyl)glycinamide: step 2/2. The chain is Phosphoribosylformylglycinamidine cyclo-ligase from Pseudomonas entomophila (strain L48).